Reading from the N-terminus, the 203-residue chain is Holliday junction branch migration complex subunit RuvA (203 aa).

Positions 1–63 (MIGKLSGKID…EEHIHLYGFL (63 aa)) are domain I. Residues 64-142 (TLEEKNFFNL…KISSGSVIIK (79 aa)) are domain II. A flexible linker region spans residues 143–149 (DSLNIKN). The segment at 150 to 203 (ITPVASNEVIKALVNLGFSRFEAQNAVQGIIIQNPEISIDELIKTALKNRNAGL) is domain III.

Belongs to the RuvA family. Homotetramer. Forms an RuvA(8)-RuvB(12)-Holliday junction (HJ) complex. HJ DNA is sandwiched between 2 RuvA tetramers; dsDNA enters through RuvA and exits via RuvB. An RuvB hexamer assembles on each DNA strand where it exits the tetramer. Each RuvB hexamer is contacted by two RuvA subunits (via domain III) on 2 adjacent RuvB subunits; this complex drives branch migration. In the full resolvosome a probable DNA-RuvA(4)-RuvB(12)-RuvC(2) complex forms which resolves the HJ.

It is found in the cytoplasm. The RuvA-RuvB-RuvC complex processes Holliday junction (HJ) DNA during genetic recombination and DNA repair, while the RuvA-RuvB complex plays an important role in the rescue of blocked DNA replication forks via replication fork reversal (RFR). RuvA specifically binds to HJ cruciform DNA, conferring on it an open structure. The RuvB hexamer acts as an ATP-dependent pump, pulling dsDNA into and through the RuvAB complex. HJ branch migration allows RuvC to scan DNA until it finds its consensus sequence, where it cleaves and resolves the cruciform DNA. The polypeptide is Holliday junction branch migration complex subunit RuvA (Rickettsia felis (strain ATCC VR-1525 / URRWXCal2) (Rickettsia azadi)).